Reading from the N-terminus, the 427-residue chain is Serine/arginine (SR)-type shuttling mRNA binding protein GBP2 (427 aa).

Residues methionine 1–leucine 101 form a disordered region. Over residues arginine 22–aspartate 32 the composition is skewed to basic and acidic residues. At serine 24 the chain carries Phosphoserine. Over residues aspartate 35–serine 44 the composition is skewed to low complexity. Residues aspartate 50–aspartate 60 are compositionally biased toward basic and acidic residues. RRM domains are found at residues asparagine 122–proline 198 and phenylalanine 219–phenylalanine 296. Phosphothreonine is present on threonine 130. Positions lysine 300 to glycine 317 are enriched in basic and acidic residues. Residues lysine 300–glutamate 319 are disordered. Positions cysteine 349–arginine 426 constitute an RRM 3 domain.

Methylated by HMT1.

The protein localises to the cytoplasm. Its subcellular location is the nucleus. It localises to the chromosome. It is found in the telomere. The protein resides in the P-body. The protein localises to the stress granule. Its function is as follows. Binds to intron-containing transcripts and is involved in quality control for the export of spliced mRNAs from the nucleus. Binds to pre-mRNAs until splicing is completed or until faulty mRNAs are degraded. On correctly spliced mRNAs, GBP2 and HRB1 recruit MEX67 to allow nuclear export. On faulty mRNAs, GBP2 and HRB1 associate with the TRAMP complex that guides those pre-mRNAs to the exosome for degradation. Binds single-stranded telomeric sequences of the type (TG[1-3])n in vitro. Influences the localization of RAP1 in the nuclei. Involved in modulating telomere length. The protein is Serine/arginine (SR)-type shuttling mRNA binding protein GBP2 of Saccharomyces cerevisiae (strain ATCC 204508 / S288c) (Baker's yeast).